The chain runs to 564 residues: Eukaryotic translation initiation factor 3 subunit L (564 aa).

Serine 2 is subject to N-acetylserine. The 207-residue stretch at 331–537 (DAIRVFANIL…IHIADTKVAR (207 aa)) folds into the PCI domain. N6-acetyllysine occurs at positions 465 and 549.

The protein belongs to the eIF-3 subunit L family. In terms of assembly, component of the eukaryotic translation initiation factor 3 (eIF-3) complex, which is composed of 13 subunits: EIF3A, EIF3B, EIF3C, EIF3D, EIF3E, EIF3F, EIF3G, EIF3H, EIF3I, EIF3J, EIF3K, EIF3L and EIF3M. The eIF-3 complex appears to include 3 stable modules: module A is composed of EIF3A, EIF3B, EIF3G and EIF3I; module B is composed of EIF3F, EIF3H, and EIF3M; and module C is composed of EIF3C, EIF3D, EIF3E, EIF3K and EIF3L. EIF3C of module C binds EIF3B of module A and EIF3H of module B, thereby linking the three modules. EIF3J is a labile subunit that binds to the eIF-3 complex via EIF3B. The eIF-3 complex interacts with RPS6KB1 under conditions of nutrient depletion. Mitogenic stimulation leads to binding and activation of a complex composed of MTOR and RPTOR, leading to phosphorylation and release of RPS6KB1 and binding of EIF4B to eIF-3. Interacts with RRN3.

The protein localises to the cytoplasm. In terms of biological role, component of the eukaryotic translation initiation factor 3 (eIF-3) complex, which is required for several steps in the initiation of protein synthesis. The eIF-3 complex associates with the 40S ribosome and facilitates the recruitment of eIF-1, eIF-1A, eIF-2:GTP:methionyl-tRNAi and eIF-5 to form the 43S pre-initiation complex (43S PIC). The eIF-3 complex stimulates mRNA recruitment to the 43S PIC and scanning of the mRNA for AUG recognition. The eIF-3 complex is also required for disassembly and recycling of post-termination ribosomal complexes and subsequently prevents premature joining of the 40S and 60S ribosomal subunits prior to initiation. The eIF-3 complex specifically targets and initiates translation of a subset of mRNAs involved in cell proliferation, including cell cycling, differentiation and apoptosis, and uses different modes of RNA stem-loop binding to exert either translational activation or repression. The chain is Eukaryotic translation initiation factor 3 subunit L from Bos taurus (Bovine).